A 663-amino-acid chain; its full sequence is Bifunctional polymyxin resistance protein ArnA (663 aa).

The tract at residues 1 to 307 is formyltransferase ArnAFT; it reads MSPKAVVFAY…EFGLVEGSQL (307 aa). The Proton donor; for formyltransferase activity role is filled by H106. (6R)-10-formyltetrahydrofolate is bound by residues R116 and 138 to 142; that span reads VKRAD. Residues 317–663 form a dehydrogenase ArnADH region; the sequence is RRTRVLILGV…EAMAEKADMR (347 aa). NAD(+) is bound by residues D350 and 371-372; that span reads DI. Residues A396, Y401, and 435 to 436 each bind UDP-alpha-D-glucuronate; that span reads TS. Residue E437 is the Proton acceptor; for decarboxylase activity of the active site. UDP-alpha-D-glucuronate contacts are provided by residues R463, N494, 528–537, and Y615; that span reads RLVDGGAQKR. Catalysis depends on R621, which acts as the Proton donor; for decarboxylase activity.

The protein in the N-terminal section; belongs to the Fmt family. UDP-L-Ara4N formyltransferase subfamily. This sequence in the C-terminal section; belongs to the NAD(P)-dependent epimerase/dehydratase family. UDP-glucuronic acid decarboxylase subfamily. Homohexamer, formed by a dimer of trimers.

It catalyses the reaction UDP-alpha-D-glucuronate + NAD(+) = UDP-beta-L-threo-pentopyranos-4-ulose + CO2 + NADH. It carries out the reaction UDP-4-amino-4-deoxy-beta-L-arabinose + (6R)-10-formyltetrahydrofolate = UDP-4-deoxy-4-formamido-beta-L-arabinose + (6S)-5,6,7,8-tetrahydrofolate + H(+). It participates in nucleotide-sugar biosynthesis; UDP-4-deoxy-4-formamido-beta-L-arabinose biosynthesis; UDP-4-deoxy-4-formamido-beta-L-arabinose from UDP-alpha-D-glucuronate: step 1/3. It functions in the pathway nucleotide-sugar biosynthesis; UDP-4-deoxy-4-formamido-beta-L-arabinose biosynthesis; UDP-4-deoxy-4-formamido-beta-L-arabinose from UDP-alpha-D-glucuronate: step 3/3. The protein operates within bacterial outer membrane biogenesis; lipopolysaccharide biosynthesis. Functionally, bifunctional enzyme that catalyzes the oxidative decarboxylation of UDP-glucuronic acid (UDP-GlcUA) to UDP-4-keto-arabinose (UDP-Ara4O) and the addition of a formyl group to UDP-4-amino-4-deoxy-L-arabinose (UDP-L-Ara4N) to form UDP-L-4-formamido-arabinose (UDP-L-Ara4FN). The modified arabinose is attached to lipid A and is required for resistance to polymyxin and cationic antimicrobial peptides. The polypeptide is Bifunctional polymyxin resistance protein ArnA (Pseudomonas savastanoi pv. phaseolicola (strain 1448A / Race 6) (Pseudomonas syringae pv. phaseolicola (strain 1448A / Race 6))).